Consider the following 69-residue polypeptide: Putative membrane protein insertion efficiency factor (69 aa).

It belongs to the UPF0161 family.

The protein resides in the cell inner membrane. In terms of biological role, could be involved in insertion of integral membrane proteins into the membrane. This Syntrophotalea carbinolica (strain DSM 2380 / NBRC 103641 / GraBd1) (Pelobacter carbinolicus) protein is Putative membrane protein insertion efficiency factor.